Reading from the N-terminus, the 330-residue chain is Phenylalanine--tRNA ligase alpha subunit (330 aa).

Glutamate 254 serves as a coordination point for Mg(2+).

This sequence belongs to the class-II aminoacyl-tRNA synthetase family. Phe-tRNA synthetase alpha subunit type 1 subfamily. Tetramer of two alpha and two beta subunits. It depends on Mg(2+) as a cofactor.

It localises to the cytoplasm. The enzyme catalyses tRNA(Phe) + L-phenylalanine + ATP = L-phenylalanyl-tRNA(Phe) + AMP + diphosphate + H(+). This chain is Phenylalanine--tRNA ligase alpha subunit (pheS), found in Neisseria meningitidis serogroup B (strain ATCC BAA-335 / MC58).